Consider the following 269-residue polypeptide: Flagellar brake protein YcgR (269 aa).

Positions 1–42 (MLREPMNQHDAPGPAETGADSDAETDAETDAETDAGAADDRY) are disordered. The segment covering 19-33 (ADSDAETDAETDAET) has biased composition (acidic residues). A PilZ domain is found at 149–261 (QRRRHFRART…MENFLQRLVF (113 aa)).

Belongs to the YcgR family. As to quaternary structure, monomer. Interacts with the flagellar basal bodies.

Its subcellular location is the bacterial flagellum basal body. Acts as a flagellar brake, regulating swimming and swarming in a bis-(3'-5') cyclic diguanylic acid (c-di-GMP)-dependent manner. Binds 1 c-di-GMP dimer per subunit. Increasing levels of c-di-GMP lead to decreased motility. The sequence is that of Flagellar brake protein YcgR from Cupriavidus taiwanensis (strain DSM 17343 / BCRC 17206 / CCUG 44338 / CIP 107171 / LMG 19424 / R1) (Ralstonia taiwanensis (strain LMG 19424)).